Consider the following 513-residue polypeptide: ATP synthase subunit alpha 2 (513 aa).

ATP is bound at residue G169 to T176.

The protein belongs to the ATPase alpha/beta chains family. In terms of assembly, F-type ATPases have 2 components, CF(1) - the catalytic core - and CF(0) - the membrane proton channel. CF(1) has five subunits: alpha(3), beta(3), gamma(1), delta(1), epsilon(1). CF(0) has three main subunits: a(1), b(2) and c(9-12). The alpha and beta chains form an alternating ring which encloses part of the gamma chain. CF(1) is attached to CF(0) by a central stalk formed by the gamma and epsilon chains, while a peripheral stalk is formed by the delta and b chains.

Its subcellular location is the cell inner membrane. The enzyme catalyses ATP + H2O + 4 H(+)(in) = ADP + phosphate + 5 H(+)(out). Functionally, produces ATP from ADP in the presence of a proton gradient across the membrane. The alpha chain is a regulatory subunit. The protein is ATP synthase subunit alpha 2 of Pseudoalteromonas atlantica (strain T6c / ATCC BAA-1087).